The following is a 181-amino-acid chain: Large ribosomal subunit protein uL5 (181 aa).

It belongs to the universal ribosomal protein uL5 family. In terms of assembly, part of the 50S ribosomal subunit; part of the 5S rRNA/L5/L18/L25 subcomplex. Contacts the 5S rRNA and the P site tRNA. Forms a bridge to the 30S subunit in the 70S ribosome.

In terms of biological role, this is one of the proteins that bind and probably mediate the attachment of the 5S RNA into the large ribosomal subunit, where it forms part of the central protuberance. In the 70S ribosome it contacts protein S13 of the 30S subunit (bridge B1b), connecting the 2 subunits; this bridge is implicated in subunit movement. Contacts the P site tRNA; the 5S rRNA and some of its associated proteins might help stabilize positioning of ribosome-bound tRNAs. The protein is Large ribosomal subunit protein uL5 of Nitrosococcus oceani (strain ATCC 19707 / BCRC 17464 / JCM 30415 / NCIMB 11848 / C-107).